The chain runs to 262 residues: Bacteriorhodopsin (262 aa).

A propeptide spanning residues Met-1–Ser-13 is cleaved from the precursor. The residue at position 14 (Gln-14) is a Pyrrolidone carboxylic acid. The Extracellular portion of the chain corresponds to Gln-14 to Glu-22. Residues Trp-23–Val-42 traverse the membrane as a helical segment. Residues Lys-43–Tyr-56 are Cytoplasmic-facing. Residues Ala-57–Leu-75 traverse the membrane as a helical segment. Over Gly-76–Tyr-92 the chain is Extracellular. Residues Trp-93–Asp-109 form a helical membrane-spanning segment. The Cytoplasmic segment spans residues Leu-110–Thr-120. A helical transmembrane segment spans residues Ile-121–Leu-140. The Extracellular portion of the chain corresponds to Thr-141–Arg-147. The helical transmembrane segment at Phe-148 to Phe-167 threads the bilayer. Topologically, residues Gly-168–Lys-185 are cytoplasmic. A helical membrane pass occupies residues Val-186 to Ile-204. Residues Gly-205–Ile-216 are Extracellular-facing. The helical transmembrane segment at Glu-217–Leu-236 threads the bilayer. An N6-(retinylidene)lysine modification is found at Lys-229. Over Leu-237–Asp-262 the chain is Cytoplasmic.

In terms of assembly, homotrimer. The covalent binding of retinal to the apoprotein, bacterioopsin, generates bacteriorhodopsin.

The protein resides in the cell membrane. Light-driven proton pump. The sequence is that of Bacteriorhodopsin (bop) from Halobacterium salinarum (strain ATCC 700922 / JCM 11081 / NRC-1) (Halobacterium halobium).